Here is a 1214-residue protein sequence, read N- to C-terminus: Receptor-type guanylate cyclase gcy-19 (1214 aa).

An N-terminal signal peptide occupies residues 1-18; the sequence is MEHLIFLLIFGGYSPSIA. The Extracellular portion of the chain corresponds to 19–517; sequence QITSSTTTTT…PQTFVDQYGA (499 aa). Residues asparagine 85, asparagine 363, asparagine 441, and asparagine 464 are each glycosylated (N-linked (GlcNAc...) asparagine). The chain crosses the membrane as a helical span at residues 518-538; sequence LVFSIGGVLALAMLFLITCFF. Topologically, residues 539–1214 are cytoplasmic; it reads YVLRQRKLER…FRRQETLALM (676 aa). In terms of domain architecture, Protein kinase spans 572-859; sequence RMSKRSIQSG…KGNLMDHVFN (288 aa). In terms of domain architecture, Guanylate cyclase spans 917–1047; the sequence is TVFFSDVVKF…DTVNTASRME (131 aa). Positions 1116 to 1197 are disordered; that stretch reads NSSNMAYNPE…EKAREIHNEE (82 aa). Positions 1133–1142 are enriched in acidic residues; the sequence is DDEDVDDESS. The segment covering 1186–1197 has biased composition (basic and acidic residues); it reads LEEKAREIHNEE.

The protein belongs to the adenylyl cyclase class-4/guanylyl cyclase family. As to expression, expressed asymmetrically in ASE right (ASER) sensory neuron.

It is found in the cell membrane. The enzyme catalyses GTP = 3',5'-cyclic GMP + diphosphate. Functionally, guanylate cyclase involved in the production of the second messenger cGMP. This chain is Receptor-type guanylate cyclase gcy-19, found in Caenorhabditis briggsae.